The primary structure comprises 238 residues: uncharacterized protein (238 aa).

2 disordered regions span residues 123-167 (FRQG…VHGG) and 180-238 (SAMG…AKRR). Over residues 152–161 (SGHSPSPGRH) the composition is skewed to low complexity. Residues 207-238 (HRGHGHRFRLLAPRSRPRQRRGGGSRAAAKRR) show a composition bias toward basic residues.

This sequence belongs to the PNP/MTAP phosphorylase family.

This is an uncharacterized protein from Rhodospirillum rubrum.